Reading from the N-terminus, the 561-residue chain is TBC1 domain family member 24 (561 aa).

Positions 36 and 40 each coordinate a 1,2-diacyl-sn-glycero-3-phospho-(1D-myo-inositol). The Rab-GAP TBC domain maps to 45–236 (AQSHTLRGKV…RVFDVFLVEG (192 aa)). Residues lysine 238, arginine 242, and 293-297 (RLFSR) contribute to the a 1,2-diacyl-sn-glycero-3-phospho-(1D-myo-inositol) site. Residues 343–556 (EIVSVKEMRD…IAAVEAWGFQ (214 aa)) enclose the TLDc domain. 2 positions are modified to phosphoserine: serine 475 and serine 482.

Interacts with ARF6. As to expression, expressed in brain, particularly at the level of the cortex and the hippocampus. Expressed in the inner ear in spiral ganglion cells, a collection of neurons critical for hearing and balance.

Its subcellular location is the cell membrane. The protein localises to the cytoplasm. It localises to the cytoplasmic vesicle membrane. The protein resides in the presynapse. In terms of biological role, may act as a GTPase-activating protein for Rab family protein(s). Involved in neuronal projections development, probably through a negative modulation of ARF6 function. Involved in the regulation of synaptic vesicle trafficking. The chain is TBC1 domain family member 24 (Tbc1d24) from Mus musculus (Mouse).